The primary structure comprises 302 residues: Methionyl-tRNA formyltransferase (302 aa).

Residue 107–110 (SDLP) coordinates (6S)-5,6,7,8-tetrahydrofolate.

Belongs to the Fmt family.

It carries out the reaction L-methionyl-tRNA(fMet) + (6R)-10-formyltetrahydrofolate = N-formyl-L-methionyl-tRNA(fMet) + (6S)-5,6,7,8-tetrahydrofolate + H(+). Attaches a formyl group to the free amino group of methionyl-tRNA(fMet). The formyl group appears to play a dual role in the initiator identity of N-formylmethionyl-tRNA by promoting its recognition by IF2 and preventing the misappropriation of this tRNA by the elongation apparatus. The chain is Methionyl-tRNA formyltransferase from Rickettsia massiliae (strain Mtu5).